The following is a 562-amino-acid chain: RNA N(6)-adenosine-methyltransferase METTL16 (562 aa).

The segment at 17–20 (PPDF) is RNA-binding. S-adenosyl-L-methionine-binding residues include arginine 82, glycine 110, serine 114, glutamate 133, threonine 164, and asparagine 184. The interval 163-167 (KTLLM) is K-loop. RNA-binding stretches follow at residues 199–211 (SRNPRRPPPSSVN), 250–254 (GKKCS), and 277–283 (QGRTMRW). Residues 289–400 (FYDDVTVPSP…QLREVPRAPE (112 aa)) form a VCR 1 region. Phosphoserine is present on serine 329. Positions 402 to 413 (VIQALEEKKPTP) are enriched in basic and acidic residues. Residues 402–498 (VIQALEEKKP…DQEASEQFGS (97 aa)) form a disordered region. Over residues 458–467 (ENPEPTEDER) the composition is skewed to acidic residues. The residue at position 463 (threonine 463) is a Phosphothreonine. Polar residues predominate over residues 480–496 (CQGSSNGAQDQEASEQF). The tract at residues 514–562 (YLFKCLINVKKEVDDALVEMHWVEGQNRDLMNQLCTYIRNQIFRLVAVN) is VCR 2.

This sequence belongs to the methyltransferase superfamily. METTL16/RlmF family. As to quaternary structure, interacts with MEPCE. Interacts with LARP7.

The protein resides in the nucleus. The protein localises to the cytoplasm. The catalysed reaction is adenosine in U6 snRNA + S-adenosyl-L-methionine = N(6)-methyladenosine in U6 snRNA + S-adenosyl-L-homocysteine + H(+). It catalyses the reaction an adenosine in mRNA + S-adenosyl-L-methionine = an N(6)-methyladenosine in mRNA + S-adenosyl-L-homocysteine + H(+). Methyltransferase activity is autoinhibited by the K-loop region that blocks S-adenosyl-L-methionine-binding. Upon activation, K-loop changes conformation, allowing S-adenosyl-L-methionine-binding and subsequent methyltransferase activity. mRNA N6-adenosine-methyltransferase activity is inhibited by zinc. Its function is as follows. RNA N6-methyltransferase that methylates adenosine residues at the N(6) position of a subset of RNAs and is involved in S-adenosyl-L-methionine homeostasis by regulating expression of MAT2A transcripts. Able to N6-methylate a subset of mRNAs and U6 small nuclear RNAs (U6 snRNAs). In contrast to the METTL3-METTL14 heterodimer, only able to methylate a limited number of RNAs: requires both a 5'UACAGAGAA-3' nonamer sequence and a specific RNA structure. Plays a key role in S-adenosyl-L-methionine homeostasis by mediating N6-methylation of MAT2A mRNAs, altering splicing of MAT2A transcripts: in presence of S-adenosyl-L-methionine, binds the 3'-UTR region of MAT2A mRNA and specifically N6-methylates the first hairpin of MAT2A mRNA, preventing recognition of their 3'-splice site by U2AF1/U2AF35, thereby inhibiting splicing and protein production of S-adenosylmethionine synthase. In S-adenosyl-L-methionine-limiting conditions, binds the 3'-UTR region of MAT2A mRNA but stalls due to the lack of a methyl donor, preventing N6-methylation and promoting expression of MAT2A. In addition to mRNAs, also able to mediate N6-methylation of U6 small nuclear RNA (U6 snRNA): specifically N6-methylates adenine in position 43 of U6 snRNAs. Also able to bind various lncRNAs, such as 7SK snRNA (7SK RNA) or 7SL RNA. Specifically binds the 3'-end of the MALAT1 long non-coding RNA. This chain is RNA N(6)-adenosine-methyltransferase METTL16, found in Homo sapiens (Human).